Consider the following 164-residue polypeptide: uncharacterized protein (164 aa).

One can recognise an HTH marR-type domain in the interval 28-157 (EAEILYQLQG…LIDVLARMRN (130 aa)). Positions 71 to 94 (QSDLQKKVNIDSAAVTRHLKQLES) form a DNA-binding region, H-T-H motif.

This is an uncharacterized protein from Bacillus subtilis (strain 168).